Consider the following 376-residue polypeptide: Succinate--CoA ligase [ADP-forming] subunit beta (376 aa).

Positions 9 to 237 (KEIFSKYGIP…PTEEEKVEAD (229 aa)) constitute an ATP-grasp domain. ATP contacts are provided by residues K46, 53-55 (GRG), V95, and E100. Mg(2+) contacts are provided by N192 and D206. Substrate is bound by residues N257 and 314 to 316 (GIT).

This sequence belongs to the succinate/malate CoA ligase beta subunit family. As to quaternary structure, heterotetramer of two alpha and two beta subunits. Mg(2+) is required as a cofactor.

It carries out the reaction succinate + ATP + CoA = succinyl-CoA + ADP + phosphate. It catalyses the reaction GTP + succinate + CoA = succinyl-CoA + GDP + phosphate. The protein operates within carbohydrate metabolism; tricarboxylic acid cycle; succinate from succinyl-CoA (ligase route): step 1/1. In terms of biological role, succinyl-CoA synthetase functions in the citric acid cycle (TCA), coupling the hydrolysis of succinyl-CoA to the synthesis of either ATP or GTP and thus represents the only step of substrate-level phosphorylation in the TCA. The beta subunit provides nucleotide specificity of the enzyme and binds the substrate succinate, while the binding sites for coenzyme A and phosphate are found in the alpha subunit. The sequence is that of Succinate--CoA ligase [ADP-forming] subunit beta from Bacteroides thetaiotaomicron (strain ATCC 29148 / DSM 2079 / JCM 5827 / CCUG 10774 / NCTC 10582 / VPI-5482 / E50).